A 415-amino-acid polypeptide reads, in one-letter code: Elongation factor Tu, chloroplastic (415 aa).

The region spanning 13–217 (KIHLNVGTIG…HLDLYLPTPR (205 aa)) is the tr-type G domain. The tract at residues 22-29 (GHFSHGKT) is G1. A GTP-binding site is contributed by 22–29 (GHFSHGKT). Thr29 is a Mg(2+) binding site. Positions 63–67 (NMSIY) are G2. Positions 84–87 (DCPG) are G3. GTP-binding positions include 84–88 (DCPGH) and 139–142 (NKED). A G4 region spans residues 139-142 (NKED). The G5 stretch occupies residues 177 to 179 (SAL).

Belongs to the TRAFAC class translation factor GTPase superfamily. Classic translation factor GTPase family. EF-Tu/EF-1A subfamily.

It localises to the plastid. The protein resides in the chloroplast. The enzyme catalyses GTP + H2O = GDP + phosphate + H(+). In terms of biological role, GTP hydrolase that promotes the GTP-dependent binding of aminoacyl-tRNA to the A-site of ribosomes during protein biosynthesis. The chain is Elongation factor Tu, chloroplastic (tufA) from Coleochaete orbicularis (Charophycean green alga).